The sequence spans 319 residues: 4-hydroxy-3-methylbut-2-enyl diphosphate reductase (319 aa).

Cysteine 12 serves as a coordination point for [4Fe-4S] cluster. Positions 41 and 74 each coordinate (2E)-4-hydroxy-3-methylbut-2-enyl diphosphate. Residues histidine 41 and histidine 74 each contribute to the dimethylallyl diphosphate site. Isopentenyl diphosphate is bound by residues histidine 41 and histidine 74. [4Fe-4S] cluster is bound at residue cysteine 96. Histidine 124 is a (2E)-4-hydroxy-3-methylbut-2-enyl diphosphate binding site. Residue histidine 124 coordinates dimethylallyl diphosphate. Histidine 124 contacts isopentenyl diphosphate. Glutamate 126 acts as the Proton donor in catalysis. Threonine 167 contributes to the (2E)-4-hydroxy-3-methylbut-2-enyl diphosphate binding site. Cysteine 197 is a [4Fe-4S] cluster binding site. Residues serine 225, serine 226, asparagine 227, and serine 269 each coordinate (2E)-4-hydroxy-3-methylbut-2-enyl diphosphate. Dimethylallyl diphosphate contacts are provided by serine 225, serine 226, asparagine 227, and serine 269. 4 residues coordinate isopentenyl diphosphate: serine 225, serine 226, asparagine 227, and serine 269.

Belongs to the IspH family. Homodimer. It depends on [4Fe-4S] cluster as a cofactor.

It carries out the reaction isopentenyl diphosphate + 2 oxidized [2Fe-2S]-[ferredoxin] + H2O = (2E)-4-hydroxy-3-methylbut-2-enyl diphosphate + 2 reduced [2Fe-2S]-[ferredoxin] + 2 H(+). The enzyme catalyses dimethylallyl diphosphate + 2 oxidized [2Fe-2S]-[ferredoxin] + H2O = (2E)-4-hydroxy-3-methylbut-2-enyl diphosphate + 2 reduced [2Fe-2S]-[ferredoxin] + 2 H(+). It functions in the pathway isoprenoid biosynthesis; dimethylallyl diphosphate biosynthesis; dimethylallyl diphosphate from (2E)-4-hydroxy-3-methylbutenyl diphosphate: step 1/1. Its pathway is isoprenoid biosynthesis; isopentenyl diphosphate biosynthesis via DXP pathway; isopentenyl diphosphate from 1-deoxy-D-xylulose 5-phosphate: step 6/6. Catalyzes the conversion of 1-hydroxy-2-methyl-2-(E)-butenyl 4-diphosphate (HMBPP) into a mixture of isopentenyl diphosphate (IPP) and dimethylallyl diphosphate (DMAPP). Acts in the terminal step of the DOXP/MEP pathway for isoprenoid precursor biosynthesis. This Buchnera aphidicola subsp. Acyrthosiphon pisum (strain Tuc7) protein is 4-hydroxy-3-methylbut-2-enyl diphosphate reductase.